A 34-amino-acid chain; its full sequence is Leader peptide SpeFL (34 aa).

The short motif at histidine 10–histidine 16 is the Ornithine recognition loop element. L-ornithine is bound at residue arginine 13.

Belongs to the speF operon leader peptide family. In terms of assembly, binds ornithine in stalled 70S ribosomes, blocking the upper two-thirds of the exit tunnel. Contacts 23S rRNA and ribosomal proteins L4 and L22.

A small protein (arrest peptide) encoded upstream of inducible ornithine carboxylase gene (speF) that controls expression of downstream genes (speF and potE) by transcriptional and translational attenuation. Its expression controls transcription and translation of downstream SpeF; translation pausing at low Arg levels on this mRNA prevents premature Rho-dependent transcription termination of speF and also enhances SprF translation by preventing sequestration of its ribosome-binding site. In the presence of high Arg levels translation of this protein allows the formation of an speF mRNA structure that is degraded by RNase G. This Salmonella typhimurium (strain SL1344) protein is Leader peptide SpeFL.